We begin with the raw amino-acid sequence, 1038 residues long: Elongation factor 3 (1038 aa).

HEAT repeat units lie at residues 93-131, 133-170, 174-211, 213-249, 255-287, and 292-331; these read EAYLLPLLSVFLDLLGDKKPTVRPVAQEAALTIISSANK, STIRILPILFDGLDRSKKWQTKKGALDLIAELSKVAPY, RCLPDIIPQVTDCMWDTRKEVKVAARDTMTKVCNVVGN, DIEPFIPALVSCLANPTEVPECTHKLASTTFVKTVEA, MEPLLKRALAEGKTAVKRQAAVIIDNMCKLMDD, and QLFIPKLLPGLKKVIETQADPECREVATRAHETLFVAGGS. Glutamate 406 contacts ADP. ABC transporter domains lie at 426-654 and 680-995; these read IFIE…YYEL and IRLT…EEVT. Residues asparagine 716, glutamate 924, asparagine 927, and histidine 953 each contribute to the ADP site. Positions 1012–1038 are disordered; it reads RKEKKAKDKARKEAEARGEYYSDSDEE. Residues 1021–1031 show a composition bias toward basic and acidic residues; that stretch reads ARKEAEARGEY.

Belongs to the ABC transporter superfamily. ABCF family. EF3 subfamily. As to quaternary structure, monomer.

Its subcellular location is the cytoplasm. It catalyses the reaction ATP + H2O = ADP + phosphate + H(+). The protein operates within protein biosynthesis; polypeptide chain elongation. Its function is as follows. Ribosome-dependent ATPase that functions in cytoplasmic translation elongation. Required for the ATP-dependent release of deacylated tRNA from the ribosomal E-site during protein biosynthesis. Stimulates the eEF1A-dependent binding of aminoacyl-tRNA to the ribosomal A-site, which has reduced affinity for tRNA as long as the E-site is occupied. Assists translation termination by stimulating the release of nascent protein from the ribosome by release factors. This chain is Elongation factor 3, found in Phytophthora infestans (strain T30-4) (Potato late blight agent).